The chain runs to 103 residues: Large ribosomal subunit protein uL24 (103 aa).

It belongs to the universal ribosomal protein uL24 family. In terms of assembly, part of the 50S ribosomal subunit.

Its function is as follows. One of two assembly initiator proteins, it binds directly to the 5'-end of the 23S rRNA, where it nucleates assembly of the 50S subunit. Functionally, one of the proteins that surrounds the polypeptide exit tunnel on the outside of the subunit. The protein is Large ribosomal subunit protein uL24 of Agathobacter rectalis (strain ATCC 33656 / DSM 3377 / JCM 17463 / KCTC 5835 / VPI 0990) (Eubacterium rectale).